Consider the following 338-residue polypeptide: Protein RecA (338 aa).

An ATP-binding site is contributed by 66–73 (GPESSGKT).

This sequence belongs to the RecA family.

It is found in the cytoplasm. Can catalyze the hydrolysis of ATP in the presence of single-stranded DNA, the ATP-dependent uptake of single-stranded DNA by duplex DNA, and the ATP-dependent hybridization of homologous single-stranded DNAs. It interacts with LexA causing its activation and leading to its autocatalytic cleavage. This chain is Protein RecA, found in Geobacter sulfurreducens (strain ATCC 51573 / DSM 12127 / PCA).